The following is a 424-amino-acid chain: ATP-sensitive inward rectifier potassium channel 8 (424 aa).

The Cytoplasmic portion of the chain corresponds to 1–69 (MLARKSIIPE…IFTTLVDLKW (69 aa)). Serine 6 carries the post-translational modification Phosphoserine. A helical membrane pass occupies residues 70-94 (RHTLVIFTMSFLCSWLLFAIMWWLV). The Extracellular segment spans residues 95 to 126 (AFAHGDIYAYMEKSGMEKSGLESTVCVTNVRS). The helical; Pore-forming intramembrane region spans 127–138 (FTSAFLFSIEVQ). An intramembrane region (pore-forming) is located at residues 139–145 (VTIGFGG). Residues 140-145 (TIGFGG) carry the Selectivity filter motif. Topologically, residues 146 to 154 (RMMTEECPL) are extracellular. Residues 155–176 (AITVLILQNIVGLIINAVMLGC) form a helical membrane-spanning segment. At 177–424 (IFMKTAQAHR…PEGNQNTSES (248 aa)) the chain is on the cytoplasmic side. Residues 375-424 (SHQNSLRKRNSMRRNNSMRRNNSIRRNNSSLMVPKVQFMTPEGNQNTSES) are disordered. Positions 387–404 (RRNNSMRRNNSIRRNNSS) are enriched in low complexity.

It belongs to the inward rectifier-type potassium channel (TC 1.A.2.1) family. KCNJ8 subfamily. Interacts with ABCC9. Predominantly detected in fetal and adult heart.

Its subcellular location is the membrane. The catalysed reaction is K(+)(in) = K(+)(out). Inward rectifier potassium channels are characterized by a greater tendency to allow potassium to flow into the cell rather than out of it. Their voltage dependence is regulated by the concentration of extracellular potassium; as external potassium is raised, the voltage range of the channel opening shifts to more positive voltages. The inward rectification is mainly due to the blockage of outward current by internal magnesium. This channel is activated by internal ATP and can be blocked by external barium. Can form a sulfonylurea-sensitive but ATP-insensitive potassium channel with ABCC9. The protein is ATP-sensitive inward rectifier potassium channel 8 (KCNJ8) of Homo sapiens (Human).